The sequence spans 1155 residues: Eukaryotic translation initiation factor 3 subunit A (1155 aa).

In terms of domain architecture, PCI spans 319–502 (LQRMAAHVLL…NSIYFGTDLT (184 aa)). 2 disordered regions span residues 589-613 (QNNA…LAEQ) and 836-1155 (AAEA…VKRR). Basic and acidic residues-rich tracts occupy residues 836-900 (AAEA…RGGD), 925-987 (DRNE…EPDS), 1004-1057 (SRDD…DAAP), and 1066-1101 (DAPR…RAPK). Positions 1104 to 1118 (GPSGGTGTAASGGGN) are enriched in gly residues. The span at 1125–1145 (PRDEPAPKRDQPQDKENKAVD) shows a compositional bias: basic and acidic residues.

The protein belongs to the eIF-3 subunit A family. As to quaternary structure, component of the eukaryotic translation initiation factor 3 (eIF-3) complex. The eIF-3 complex interacts with pix.

The protein resides in the cytoplasm. Its function is as follows. RNA-binding component of the eukaryotic translation initiation factor 3 (eIF-3) complex, which is involved in protein synthesis of a specialized repertoire of mRNAs and, together with other initiation factors, stimulates binding of mRNA and methionyl-tRNAi to the 40S ribosome. The eIF-3 complex specifically targets and initiates translation of a subset of mRNAs involved in cell proliferation. This is Eukaryotic translation initiation factor 3 subunit A from Drosophila pseudoobscura pseudoobscura (Fruit fly).